A 456-amino-acid chain; its full sequence is Maturase-like protein 1 (456 aa).

To group II intron maturases.

It localises to the plastid. In terms of biological role, could be required for group III intron excision. This Euglena longa (Euglenophycean alga) protein is Maturase-like protein 1 (mat1).